A 531-amino-acid polypeptide reads, in one-letter code: GTPase Obg (531 aa).

The region spanning 2 to 159 is the Obg domain; it reads ASFVDRVIVH…QEVELELKSI (158 aa). An OBG-type G domain is found at 160-341; the sequence is ADIALVGFPS…LSFAMAALVS (182 aa). GTP is bound by residues 166 to 173, 191 to 195, 212 to 215, 293 to 296, and 322 to 324; these read GFPSAGKS, FTTLV, DVPG, NKVD, and STA. Positions 173 and 193 each coordinate Mg(2+). The tract at residues 346–365 is disordered; it reads QEEQREQQRQTVPVLQPEPV. Positions 368–453 constitute an OCT domain; that stretch reads RRGRDRREFV…ENGVVFDWEP (86 aa). Positions 459–531 are disordered; the sequence is AELLGGPRGS…TSETKETNEK (73 aa). Basic and acidic residues-rich tracts occupy residues 468–507 and 514–531; these read SDLR…ERRA and VDAR…TNEK.

The protein belongs to the TRAFAC class OBG-HflX-like GTPase superfamily. OBG GTPase family. As to quaternary structure, monomer. It depends on Mg(2+) as a cofactor.

The protein resides in the cytoplasm. Its function is as follows. An essential GTPase which binds GTP, GDP and possibly (p)ppGpp with moderate affinity, with high nucleotide exchange rates and a fairly low GTP hydrolysis rate. Plays a role in control of the cell cycle, stress response, ribosome biogenesis and in those bacteria that undergo differentiation, in morphogenesis control. This chain is GTPase Obg, found in Kocuria rhizophila (strain ATCC 9341 / DSM 348 / NBRC 103217 / DC2201).